Here is a 473-residue protein sequence, read N- to C-terminus: NAD-dependent protein deacetylase SRT1 (473 aa).

The Deacetylase sirtuin-type domain occupies 27–267 (SHLLQCKIEE…AGVMESLNMK (241 aa)). NAD(+) is bound by residues 52 to 71 (GAGISTSCGIPDFRGPKGIW) and 114 to 117 (QNVD). H134 acts as the Proton acceptor in catalysis. Zn(2+) is bound by residues C142, C145, C167, and C172. NAD(+) is bound by residues 209–211 (GTS), 235–237 (NLQ), and V253. Positions 447–473 (LEGSGTSRKRSRTGKRKSKALAEETKA) are disordered. Over residues 453-465 (SRKRSRTGKRKSK) the composition is skewed to basic residues.

It belongs to the sirtuin family. Class IV subfamily. Binds to the promoter region of genes influenced by ethylene. Interacts with ENAP1; this interaction is enhanced in the presence of ethylene. The cofactor is Zn(2+).

The protein resides in the nucleus. It carries out the reaction N(6)-acetyl-L-lysyl-[protein] + NAD(+) + H2O = 2''-O-acetyl-ADP-D-ribose + nicotinamide + L-lysyl-[protein]. NAD-dependent protein deacetylase. Has deacetylase activity towards H3K9Ac. May have a function in the safeguard against genome instability and DNA damage to ensure plant cell growth. Involved in responses to ethylene leading to the transcriptional repression of some ethylene-responsive genes via the regulation of histone acetylation H3K9Ac. The sequence is that of NAD-dependent protein deacetylase SRT1 from Arabidopsis thaliana (Mouse-ear cress).